The chain runs to 396 residues: Interactor of constitutive active ROPs 5 (396 aa).

Disordered regions lie at residues 1-49 and 99-122; these read MQTP…TQIP and ALKR…NASE. 2 coiled-coil regions span residues 67-124 and 158-366; these read KKRT…SEDS and LSSA…TAAS. Over residues 99–115 the composition is skewed to basic and acidic residues; sequence ALKREAQEEAEDAKHQL.

This sequence belongs to the ICR family. Component of the active ARAC10-IRC5-KIN13A complex. Homooligomer. Interacts (via C-terminus) with ARAC4, ARAC10, ARAC11 and (via N-terminus) with KIN13A (via C-terminus), but no interactions with SEC3A. In terms of tissue distribution, expressed in xylem cells in the roots and in stamens, petals and pollen.

The protein localises to the cell membrane. The protein resides in the cytoplasm. Its subcellular location is the cytoskeleton. In terms of biological role, ROP effector binding specifically activated ROPs and linking them to the microtubule cytoskeleton. Involved in ROP-regulated polar growth. Involved in local disassembly of cortical microtubules when associated with ARAC10 and KIN13A and conversely also mediates the elimination of ARAC10 from the plasma membrane by the cortical microtubules. Accumulates at the plus end of shrinking microtubules. Targets KIN13A to microtubules. The chain is Interactor of constitutive active ROPs 5 (ICR5) from Arabidopsis thaliana (Mouse-ear cress).